A 521-amino-acid polypeptide reads, in one-letter code: MSFSRTEAAPAATLPDLAATLAAPRDGAFLQLGAAFLTRQPAAPLPAPYVVGFSDDAARMLGLDPALRDAPGFAGLFCGNPTRDWPQASLPYASVYSGHQFGVWAGQLGDGRALTIGELEHDGRRYELQLKGAGRTPYSRMGDGRAVLRSSIREYLCSEAMHHLGIPTTRALAVIGSDQPVVREEIETSAVVTRVAESFVRFGHFEHFFANDRPEQLRALADHVIDRFYPACRDADDPYLALLAEATRRTAELVAQWQAVGFCHGVMNTDNMSILGVTIDYGPFGFIDAFDAKHVCNHSDTHGRYAYRMQPRIAHWNCFCLAQALLPLIGLHRDAPSEDARAERAVEDAHAVLGRFAEQFGPALERAMRAKLGLELEREGDAALANQLLEIMDASRADFTLTFRHLARVSKHDARGDAPVRDLFVDRDAFDRWANLYRARLSEEARDDAARAAAMNRANPKYVLRNHLAETAIRRAKEKDFSEVERLAAVLRRPFDEQPEHDAYAALPPDWASTLEVSCSS.

G109, G111, R112, K131, D143, G144, R194, and R201 together coordinate ATP. D270 acts as the Proton acceptor in catalysis. Mg(2+) contacts are provided by N271 and D280. D280 is a binding site for ATP.

It belongs to the SELO family. Mg(2+) serves as cofactor. Requires Mn(2+) as cofactor.

It carries out the reaction L-seryl-[protein] + ATP = 3-O-(5'-adenylyl)-L-seryl-[protein] + diphosphate. It catalyses the reaction L-threonyl-[protein] + ATP = 3-O-(5'-adenylyl)-L-threonyl-[protein] + diphosphate. The catalysed reaction is L-tyrosyl-[protein] + ATP = O-(5'-adenylyl)-L-tyrosyl-[protein] + diphosphate. The enzyme catalyses L-histidyl-[protein] + UTP = N(tele)-(5'-uridylyl)-L-histidyl-[protein] + diphosphate. It carries out the reaction L-seryl-[protein] + UTP = O-(5'-uridylyl)-L-seryl-[protein] + diphosphate. It catalyses the reaction L-tyrosyl-[protein] + UTP = O-(5'-uridylyl)-L-tyrosyl-[protein] + diphosphate. In terms of biological role, nucleotidyltransferase involved in the post-translational modification of proteins. It can catalyze the addition of adenosine monophosphate (AMP) or uridine monophosphate (UMP) to a protein, resulting in modifications known as AMPylation and UMPylation. The polypeptide is Protein nucleotidyltransferase YdiU (Burkholderia thailandensis (strain ATCC 700388 / DSM 13276 / CCUG 48851 / CIP 106301 / E264)).